The sequence spans 1220 residues: Osmosensing histidine protein kinase SLN1 (1220 aa).

Residues 1–22 are Cytoplasmic-facing; that stretch reads MRFGLPSKLELTPPFRIGIRTQ. Residues 23 to 46 traverse the membrane as a helical segment; that stretch reads LTALVSIVALGSLIILAVTTGVYF. Residues 47-333 are Extracellular-facing; the sequence is TSNYKNLRSD…FLSPATKLAK (287 aa). N100, N138, N142, N181, N224, and N272 each carry an N-linked (GlcNAc...) asparagine glycan. A helical transmembrane segment spans residues 334–354; sequence IITGTVIAIGVFVILLTLPLA. Residues 355-1220 are Cytoplasmic-facing; sequence HWAVQPIVRL…AAYQGKKNNK (866 aa). Disordered regions lie at residues 414-433 and 444-500; these read GSTT…GAAF and NLGN…HILT. Positions 451-468 are enriched in basic and acidic residues; sequence SPPEEENKIPNNHTDAKI. S502 bears the Phosphoserine mark. Positions 573 to 928 constitute a Histidine kinase domain; sequence NISHELRTPL…KFTFTLPLNQ (356 aa). At H576 the chain carries Phosphohistidine; by autocatalysis. Residues S758 and S833 each carry the phosphoserine modification. Disordered regions lie at residues 960 to 1016 and 1040 to 1081; these read AKSI…DNGG and NSLS…VKDD. Polar residues predominate over residues 965-984; the sequence is SRQSTSSVATPATNRSSLTN. Residues 988-1000 are compositionally biased toward basic and acidic residues; the sequence is PEVRSKGKHETKD. Phosphoserine occurs at positions 1041 and 1044. Residues 1063 to 1075 show a composition bias toward polar residues; sequence LQSTGTATSSRNI. In terms of domain architecture, Response regulatory spans 1089–1210; the sequence is KILVVEDNHV…KLKTILTEFC (122 aa). The Mg(2+) site is built by E1094, D1095, D1144, and K1195. Residue D1144 is modified to 4-aspartylphosphate.

Interacts with DJP1, MOG1 and YPD1. The phosphorelay mechanism involves the sequential transfer of a phosphate group from His-576 (H1) in the histidine kinase domain (transmitter domain) to Asp-1144 (D1) of the response regulatory domain (receiver domain). This transfer probably occurs between two SLN1 molecules, rather than intramolecularly. The phosphate group is further transferred to 'His-64' (H2) of YPD1 and finally to 'Asp-554' (D2) of SSK1 or 'Asp-427' (D2) of SKN7.

It localises to the cell membrane. The enzyme catalyses ATP + protein L-histidine = ADP + protein N-phospho-L-histidine.. Its function is as follows. Histidine kinase that acts as an osmosensor at the plasma membrane. Part of the bifurcated SLN1-YPD1-SKN7/SSK1 two-component regulatory system, which controls activity of the HOG1 pathway and gene expression in response to changes in the osmolarity of the extracellular environment. Under normal osmotic conditions, the histidine kinase autophosphorylates His-576. This phosphate is subsequently transferred to Asp-1144, from where it is relayed to 'His-64' of the phosphorelay intermediate protein YPD1. Under high osmolarity conditions, the histidine kinase is no longer active. This is Osmosensing histidine protein kinase SLN1 (SLN1) from Saccharomyces cerevisiae (strain ATCC 204508 / S288c) (Baker's yeast).